A 1370-amino-acid polypeptide reads, in one-letter code: DNA-directed RNA polymerase subunit beta (1370 aa).

Belongs to the RNA polymerase beta chain family. As to quaternary structure, the RNAP catalytic core consists of 2 alpha, 1 beta, 1 beta' and 1 omega subunit. When a sigma factor is associated with the core the holoenzyme is formed, which can initiate transcription.

It catalyses the reaction RNA(n) + a ribonucleoside 5'-triphosphate = RNA(n+1) + diphosphate. In terms of biological role, DNA-dependent RNA polymerase catalyzes the transcription of DNA into RNA using the four ribonucleoside triphosphates as substrates. This is DNA-directed RNA polymerase subunit beta from Albidiferax ferrireducens (strain ATCC BAA-621 / DSM 15236 / T118) (Rhodoferax ferrireducens).